Here is a 148-residue protein sequence, read N- to C-terminus: Single-stranded DNA-binding protein, mitochondrial (148 aa).

A mitochondrion-targeting transit peptide spans M1–H16. The region spanning L30–S141 is the SSB domain. 2 positions are modified to phosphoserine: S67 and S79. K113 is subject to N6-acetyllysine. At K122 the chain carries N6-succinyllysine.

Homotetramer. Interacts with MPG/AAG, through inhibition of its glycosylase activity it potentially prevents formation of DNA breaks in ssDNA, ensuring that base removal primarily occurs in dsDNA. Interacts with POLDIP2. Interacts with PRIMPOL.

It is found in the mitochondrion. It localises to the mitochondrion matrix. The protein localises to the mitochondrion nucleoid. In terms of biological role, binds preferentially and cooperatively to pyrimidine rich single-stranded DNA (ss-DNA). In vitro, required to maintain the copy number of mitochondrial DNA (mtDNA) and plays a crucial role during mtDNA replication by stimulating the activity of the replisome components POLG and TWNK at the replication fork. Promotes the activity of the gamma complex polymerase POLG, largely by organizing the template DNA and eliminating secondary structures to favor ss-DNA conformations that facilitate POLG activity. In addition it is able to promote the 5'-3' unwinding activity of the mtDNA helicase TWNK. May also function in mtDNA repair. In Oryctolagus cuniculus (Rabbit), this protein is Single-stranded DNA-binding protein, mitochondrial (SSBP1).